Here is a 61-residue protein sequence, read N- to C-terminus: Potassium channel toxin alpha-KTx 6.6 (61 aa).

The first 23 residues, 1–23 (MNAKFILLLLVVATTMLLPDTQG), serve as a signal peptide directing secretion. 4 disulfide bridges follow: C29–C50, C35–C55, C39–C57, and C45–C60. C60 carries the post-translational modification Cysteine amide.

The protein belongs to the short scorpion toxin superfamily. Potassium channel inhibitor family. Alpha-KTx 06 subfamily. Expressed by the venom gland.

It is found in the secreted. Blocker of voltage-gated potassium channels. The sequence is that of Potassium channel toxin alpha-KTx 6.6 from Opistophthalmus carinatus (African yellow leg scorpion).